Here is a 158-residue protein sequence, read N- to C-terminus: Transcription antitermination protein NusB (158 aa).

Belongs to the NusB family.

Functionally, involved in transcription antitermination. Required for transcription of ribosomal RNA (rRNA) genes. Binds specifically to the boxA antiterminator sequence of the ribosomal RNA (rrn) operons. This Bartonella henselae (strain ATCC 49882 / DSM 28221 / CCUG 30454 / Houston 1) (Rochalimaea henselae) protein is Transcription antitermination protein NusB.